A 289-amino-acid chain; its full sequence is NAD(P)H-hydrate epimerase (289 aa).

The region spanning 71 to 277 (AQTIDNELMS…SIVEKYNLKV (207 aa)) is the YjeF N-terminal domain. 122–126 (NNGGD) lines the (6S)-NADPHX pocket. Residues Asn-123 and Asp-185 each coordinate K(+). (6S)-NADPHX is bound by residues 189–195 (GFSFTGE) and Asp-218. K(+) is bound at residue Ser-221.

The protein belongs to the NnrE/AIBP family. K(+) serves as cofactor.

The enzyme catalyses (6R)-NADHX = (6S)-NADHX. It carries out the reaction (6R)-NADPHX = (6S)-NADPHX. Functionally, catalyzes the epimerization of the S- and R-forms of NAD(P)HX, a damaged form of NAD(P)H that is a result of enzymatic or heat-dependent hydration. This is a prerequisite for the S-specific NAD(P)H-hydrate dehydratase to allow the repair of both epimers of NAD(P)HX. This is NAD(P)H-hydrate epimerase from Plasmodium vivax (strain Salvador I).